Here is a 691-residue protein sequence, read N- to C-terminus: Elongation factor G (691 aa).

A tr-type G domain is found at 8–283; the sequence is EDYRNFGIMA…AVVDFLPSPI (276 aa). GTP contacts are provided by residues 17-24, 81-85, and 135-138; these read AHIDAGKT, DTPGH, and NKMD.

It belongs to the TRAFAC class translation factor GTPase superfamily. Classic translation factor GTPase family. EF-G/EF-2 subfamily.

The protein resides in the cytoplasm. Its function is as follows. Catalyzes the GTP-dependent ribosomal translocation step during translation elongation. During this step, the ribosome changes from the pre-translocational (PRE) to the post-translocational (POST) state as the newly formed A-site-bound peptidyl-tRNA and P-site-bound deacylated tRNA move to the P and E sites, respectively. Catalyzes the coordinated movement of the two tRNA molecules, the mRNA and conformational changes in the ribosome. The chain is Elongation factor G from Xanthobacter autotrophicus (strain ATCC BAA-1158 / Py2).